A 474-amino-acid chain; its full sequence is Protein nucleotidyltransferase YdiU (474 aa).

Positions 89, 91, 92, 112, 124, 125, 175, and 182 each coordinate ATP. Aspartate 256 acts as the Proton acceptor in catalysis. Asparagine 257 and aspartate 266 together coordinate Mg(2+). Aspartate 266 serves as a coordination point for ATP.

This sequence belongs to the SELO family. It depends on Mg(2+) as a cofactor. Requires Mn(2+) as cofactor.

The enzyme catalyses L-seryl-[protein] + ATP = 3-O-(5'-adenylyl)-L-seryl-[protein] + diphosphate. The catalysed reaction is L-threonyl-[protein] + ATP = 3-O-(5'-adenylyl)-L-threonyl-[protein] + diphosphate. It carries out the reaction L-tyrosyl-[protein] + ATP = O-(5'-adenylyl)-L-tyrosyl-[protein] + diphosphate. It catalyses the reaction L-histidyl-[protein] + UTP = N(tele)-(5'-uridylyl)-L-histidyl-[protein] + diphosphate. The enzyme catalyses L-seryl-[protein] + UTP = O-(5'-uridylyl)-L-seryl-[protein] + diphosphate. The catalysed reaction is L-tyrosyl-[protein] + UTP = O-(5'-uridylyl)-L-tyrosyl-[protein] + diphosphate. Nucleotidyltransferase involved in the post-translational modification of proteins. It can catalyze the addition of adenosine monophosphate (AMP) or uridine monophosphate (UMP) to a protein, resulting in modifications known as AMPylation and UMPylation. This chain is Protein nucleotidyltransferase YdiU, found in Corynebacterium glutamicum (strain ATCC 13032 / DSM 20300 / JCM 1318 / BCRC 11384 / CCUG 27702 / LMG 3730 / NBRC 12168 / NCIMB 10025 / NRRL B-2784 / 534).